The primary structure comprises 278 residues: ATPase SWSAP1 (278 aa).

Positions 237–278 (SPEKKDSSAGSQSLTLGCDNLPGPGSPLDGILTSETGADSKT) are disordered. Residues 269-278 (TSETGADSKT) are compositionally biased toward polar residues.

In terms of assembly, interacts with ZSWIM7; they form a functional complex involved in homologous recombination repair and stabilize each other. Interacts with RAD51, RAD51B, RAD51C, RAD51D and XRCC3; involved in homologous recombination repair.

The protein resides in the nucleus. In terms of biological role, ATPase which is preferentially stimulated by single-stranded DNA and is involved in homologous recombination repair (HRR). Has a DNA-binding activity which is independent of its ATPase activity. This Mus musculus (Mouse) protein is ATPase SWSAP1 (Swsap1).